Consider the following 383-residue polypeptide: Chaperone protein DnaJ (383 aa).

The region spanning 5 to 70 (DYYKTLGVTQ…KKRTAYDQYG (66 aa)) is the J domain. The CR-type zinc-finger motif lies at 137-215 (GTIKEIKIPT…CHGNGRIEIS (79 aa)). The Zn(2+) site is built by C150, C153, C167, C170, C189, C192, C203, and C206. CXXCXGXG motif repeat units lie at residues 150–157 (CPTCYGYG), 167–174 (CPTCRGNG), 189–196 (CPQCHGEG), and 203–210 (CRRCHGNG).

Belongs to the DnaJ family. Homodimer. Zn(2+) is required as a cofactor.

It localises to the cytoplasm. Participates actively in the response to hyperosmotic and heat shock by preventing the aggregation of stress-denatured proteins and by disaggregating proteins, also in an autonomous, DnaK-independent fashion. Unfolded proteins bind initially to DnaJ; upon interaction with the DnaJ-bound protein, DnaK hydrolyzes its bound ATP, resulting in the formation of a stable complex. GrpE releases ADP from DnaK; ATP binding to DnaK triggers the release of the substrate protein, thus completing the reaction cycle. Several rounds of ATP-dependent interactions between DnaJ, DnaK and GrpE are required for fully efficient folding. Also involved, together with DnaK and GrpE, in the DNA replication of plasmids through activation of initiation proteins. The polypeptide is Chaperone protein DnaJ (Buchnera aphidicola subsp. Baizongia pistaciae (strain Bp)).